The following is a 297-amino-acid chain: MVALADYPQIAAGKVRQLHAVDDEHLLLVASDRISAFDHVLSTPIPDKGRVLTAMSVFWFNLLSDVVPNHLVAWDDPRIPAEVRGRALLVRRLEMLQVECVARGYLTGSGLLDYQRTGAVCGVVLPEGLTEASRLPEPIFTPATKAELGAHDENVSFEAVAEAVGQELAAELRELTLRVYGRAAEHARERGVILADTKFEFGVAGGGALVLGDEVLTPDSSRYWPADGYEPGKVQPSFDKQYVRNWLTSAESGWDRASDTPPPPLPDDVVAATRARYVEAYERITGLDLADWPSPAA.

This sequence belongs to the SAICAR synthetase family.

The catalysed reaction is 5-amino-1-(5-phospho-D-ribosyl)imidazole-4-carboxylate + L-aspartate + ATP = (2S)-2-[5-amino-1-(5-phospho-beta-D-ribosyl)imidazole-4-carboxamido]succinate + ADP + phosphate + 2 H(+). Its pathway is purine metabolism; IMP biosynthesis via de novo pathway; 5-amino-1-(5-phospho-D-ribosyl)imidazole-4-carboxamide from 5-amino-1-(5-phospho-D-ribosyl)imidazole-4-carboxylate: step 1/2. This is Phosphoribosylaminoimidazole-succinocarboxamide synthase from Saccharopolyspora erythraea (strain ATCC 11635 / DSM 40517 / JCM 4748 / NBRC 13426 / NCIMB 8594 / NRRL 2338).